Here is a 604-residue protein sequence, read N- to C-terminus: Sulfite reductase [NADPH] flavoprotein alpha-component (604 aa).

The region spanning 65–203 (VTILYGSQTG…AAGQWHADVL (139 aa)) is the Flavodoxin-like domain. FMN contacts are provided by residues 71 to 76 (SQTGNG), 118 to 121 (STHG), and 154 to 163 (LGDSSYEFFC). One can recognise an FAD-binding FR-type domain in the interval 236–453 (QNPYSAEVLV…VEPNKHFRLP (218 aa)). FAD-binding positions include Thr324, Leu358, 392–395 (RLYS), 410–412 (TVA), and 425–428 (GGAS). NADP(+)-binding positions include 524–525 (SR), 530–534 (KIYVQ), and Asp566. Tyr604 serves as a coordination point for FAD.

Belongs to the NADPH-dependent sulphite reductase flavoprotein subunit CysJ family. It in the N-terminal section; belongs to the flavodoxin family. The protein in the C-terminal section; belongs to the flavoprotein pyridine nucleotide cytochrome reductase family. As to quaternary structure, alpha(8)-beta(8). The alpha component is a flavoprotein, the beta component is a hemoprotein. It depends on FAD as a cofactor. The cofactor is FMN.

The enzyme catalyses hydrogen sulfide + 3 NADP(+) + 3 H2O = sulfite + 3 NADPH + 4 H(+). It participates in sulfur metabolism; hydrogen sulfide biosynthesis; hydrogen sulfide from sulfite (NADPH route): step 1/1. Its function is as follows. Component of the sulfite reductase complex that catalyzes the 6-electron reduction of sulfite to sulfide. This is one of several activities required for the biosynthesis of L-cysteine from sulfate. The flavoprotein component catalyzes the electron flow from NADPH -&gt; FAD -&gt; FMN to the hemoprotein component. This Shewanella sp. (strain MR-4) protein is Sulfite reductase [NADPH] flavoprotein alpha-component.